The primary structure comprises 165 residues: Iron sulfur cluster assembly protein 1, mitochondrial (165 aa).

Residues 1 to 27 constitute a mitochondrion transit peptide; the sequence is MLPVITRFARPALMAIRPVNAMGVLRA. The interval 132 to 136 is SSQ1 binding region; that stretch reads LPPVK.

This sequence belongs to the NifU family. As to quaternary structure, homodimer, but can exist as monomers or trimers. Oligomerization may be regulated by Zn(2+) availability. Component of the core Fe-S cluster (ISC) assembly machinery. Interacts with YFH1/frataxin with a 1 to 1 stoichiometry; the interaction is direct. Interacts with the mitochondrial co-chaperones JAC1 and SSQ1. Interacts with NFS1. Interacts with YAH1/ferredoxin; interacts with the reduced form. The cofactor is [2Fe-2S] cluster. Zn(2+) serves as cofactor.

It localises to the mitochondrion matrix. Its pathway is cofactor biosynthesis; iron-sulfur cluster biosynthesis. Functionally, scaffold protein for the de novo synthesis of iron-sulfur (Fe-S) clusters within mitochondria, which is required for maturation of both mitochondrial and cytoplasmic [2Fe-2S] and [4Fe-4S] proteins. First, a [2Fe-2S] cluster is transiently assembled on the scaffold proteins ISU1 and ISU2. In a second step, the cluster is released from ISU1/ISU2, transferred to glutaredoxin GRX5, followed by the formation of mitochondrial [2Fe-2S] proteins, the synthesis of [4Fe-4S] clusters and their target-specific insertion into the recipient apoproteins. Cluster assembly on ISU1/ISU2 depends on the function of the cysteine desulfurase complex NFS1-ISD11, which serves as the sulfur donor for cluster synthesis, the iron-binding protein frataxin (YFH1) as the putative iron donor, and the electron transfer chain comprised of ferredoxin reductase ARH1 and ferredoxin YAH1, which receive their electrons from NADH. Fe-S cluster release from ISU1/ISU2 is achieved by interaction with the Hsp70 chaperone SSQ1, assisted by the DnaJ-like co-chaperone JAC1 and the nucleotide exchange factor MGE1. ISU1 is the major isoform in yeast, while ISU2 is not detectable in cells grown to stationary phase. Also involved in production of a sulfur precursor required for thiolation of cytoplasmic tRNAs. In Saccharomyces cerevisiae (strain ATCC 204508 / S288c) (Baker's yeast), this protein is Iron sulfur cluster assembly protein 1, mitochondrial.